A 226-amino-acid polypeptide reads, in one-letter code: Beta-casein (226 aa).

The first 15 residues, 1–15 (MKVLILACLVALALA), serve as a signal peptide directing secretion. Thr18 bears the Phosphothreonine; in form 5-P mark. Ser21 carries the phosphoserine; in form 4-P and form 5-P modification. Ser23 carries the post-translational modification Phosphoserine; in form 3-P, form 4-P and form 5-P. A phosphoserine; in form 1-P, form 2-P, form 3-P, form 4-P and form 5-P mark is found at Ser24 and Ser25.

Belongs to the beta-casein family. Post-translationally, form 1-P is phosphorylated once; half of the molecules are phosphorylated on Ser-24, half on Ser-25. In terms of tissue distribution, mammary gland specific. Secreted in milk.

The protein localises to the secreted. Its function is as follows. Important role in determination of the surface properties of the casein micelles. In Homo sapiens (Human), this protein is Beta-casein (CSN2).